A 201-amino-acid chain; its full sequence is Histone-like protein HC2 (201 aa).

Positions 1 to 69 (MLGVQKKCST…VAKKATAKKA (69 aa)) are disordered. 2 stretches are compositionally biased toward basic residues: residues 8–50 (CSTR…KTVA) and 59–69 (PVAKKATAKKA).

The protein belongs to the histone H1/H5 family. HCT subfamily.

Might have a role in establishing the nucleoid structure of elementary bodies. The protein is Histone-like protein HC2 (hctB) of Chlamydia trachomatis serovar D (strain ATCC VR-885 / DSM 19411 / UW-3/Cx).